We begin with the raw amino-acid sequence, 178 residues long: Probable chorismate pyruvate-lyase (178 aa).

Residues Arg73, Leu111, and Glu163 each coordinate substrate.

It belongs to the UbiC family.

The protein resides in the cytoplasm. It carries out the reaction chorismate = 4-hydroxybenzoate + pyruvate. The protein operates within cofactor biosynthesis; ubiquinone biosynthesis. Removes the pyruvyl group from chorismate, with concomitant aromatization of the ring, to provide 4-hydroxybenzoate (4HB) for the ubiquinone pathway. This is Probable chorismate pyruvate-lyase from Pseudomonas aeruginosa (strain UCBPP-PA14).